The primary structure comprises 2492 residues: MTAEPMSESKLNTLVQKLHDFLAHSSEESEETSSPPRLAMNQNTDKISGSGSNSDMMENSKEEGTSSSEKSKSSGSSRSKRKPSIVTKYVESDDEKPLDDETVNEDASNENSENDITMQSLPKGTVIVQPEPVLNEDKDDFKGPEFRSRSKMKTENLKKRGEDGLHGIVSCTACGQQVNHFQKDSIYRHPSLQVLICKNCFKYYMSDDISRDSDGMDEQCRWCAEGGNLICCDFCHNAFCKKCILRNLGRKELSTIMDENNQWYCYICHPEPLLDLVTACNSVFENLEQLLQQNKKKIKVDSEKSNKVYEHTSRFSPKKTSSNCNGEEKKLDDSCSGSVTYSYSALIVPKEMIKKAKKLIETTANMNSSYVKFLKQATDNSEISSATKLRQLKAFKSVLADIKKAHLALEEDLNSEFRAMDAVNKEKNTKEHKVIDAKFETKARKGEKPCALEKKDISKSEAKLSRKQVDSEHMDQNVPTEEQRANKSTGGEHKKSDRKEEPQYEPANTSEDLDMDIVSVPSSVPEDIFENLETAMEVQSSVDHQGDGSSGTEQEVESSSVKLNISSKDNRGGIKSKTTAKVTKELYVKLTPVSLSNSPIKGADCQEVPQDKDGYKSCGLNPKLEKCGLGQENSDNEHLVENEVSLLLEESDLRRSPRVKTTPLRRPTETNPVTSNSDEECNETVKEKQKLSVPVRKKDKRNSSDSAIDNPKPNKLPKSKQSETVDQNSDSDEMLAILKEVSRMSHSSSSDTDINEIHTNHKTLYDLKTQAGKDDKGKRKRKSSTSGSDFDTKKGKSAKSSIISKKKRQTQSESSNYDSELEKEIKSMSKIGAARTTKKRIPNTKDFDSSEDEKHSKKGMDNQGHKNLKTSQEGSSDDAERKQERENFSSAEGTVDKDTTIMELRDRLPKKQQASASTDGVDKFSGKEESFTSLEVRKVAETKEKSKHLKTKTCKKVQDGLSDTAEKFLKKDQSDETSEDDKKQSKKGTEEKKKPSDFKKKVIKMEQQYESSSDGTEKLPEREEICHFPKGIKQIKNGTTDGEKKSKKIRDKTSKKKDELSDYAEKSTGKGDSCDSSEDKKSKNGAYGREKKRCKLLGKSSRKRQDCSSSDTEKYSMKEDGCNSSDKRLKRIELRERRNLSSKRNTKEIQSGSSSSDAEESSEDNKKKQQRTSSKKKAVIVKEKKRNSLRTSTKRKQADITSSSSSDIEDDDQNSIGEGSSDEQKIKPVTENLVLSSHTGFCQSSGDEALSKSVPVTVDDDDDDNDPENRIAKKMLLEEIKANLSSDEDGSSDDEPEEGKKRTGKQNEENPGDEEAKNQVNSESDSDSEESKKPRYRHRLLRHKLTVSDGESGEEKKTKPKEHKEVKGRNRRKVSSEDSEDSDFQESGVSEEVSESEDEQRPRTRSAKKAELEENQRSYKQKKKRRRIKVQEDSSSENKSNSEEEEEEKEEEEEEEEEEEEEEEDENDDSKSPGKGRKKIRKILKDDKLRTETQNALKEEEERRKRIAEREREREKLREVIEIEDASPTKCPITTKLVLDEDEETKEPLVQVHRNMVIKLKPHQVDGVQFMWDCCCESVKKTKKSPGSGCILAHCMGLGKTLQVVSFLHTVLLCDKLDFSTALVVCPLNTALNWMNEFEKWQEGLKDDEKLEVSELATVKRPQERSYMLQRWQEDGGVMIIGYEMYRNLAQGRNVKSRKLKEIFNKALVDPGPDFVVCDEGHILKNEASAVSKAMNSIRSRRRIILTGTPLQNNLIEYHCMVNFIKENLLGSIKEFRNRFINPIQNGQCADSTMVDVRVMKKRAHILYEMLAGCVQRKDYTALTKFLPPKHEYVLAVRMTSIQCKLYQYYLDHLTGVGNNSEGGRGKAGAKLFQDFQMLSRIWTHPWCLQLDYISKENKGYFDEDSMDEFIASDSDETSMSLSSDDYTKKKKKGKKGKKDSSSSGSGSDNDVEVIKVWNSRSRGGGEGNVDETGNNPSVSLKLEESKATSSSNPSSPAPDWYKDFVTDADAEVLEHSGKMVLLFEILRMAEEIGDKVLVFSQSLISLDLIEDFLELASREKTEDKDKPLIYKGEGKWLRNIDYYRLDGSTTAQSRKKWAEEFNDETNVRGRLFIISTKAGSLGINLVAANRVIIFDASWNPSYDIQSIFRVYRFGQTKPVYVYRFLAQGTMEDKIYDRQVTKQSLSFRVVDQQQVERHFTMNELTELYTFEPDLLDDPNSEKKKKRDTPMLPKDTILAELLQIHKEHIVGYHEHDSLLDHKEEEELTEEERKAAWAEYEAEKKGLTMRFNIPTGTNLPPVSFNSQTPYIPFNLGALSAMSNQQLEDLINQGREKVVEATNSVTAVRIQPLEDIISAVWKENMNLSEAQVQALALSRQASQELDVKRREAIYNDVLTKQQMLISCVQRILMNRRLQQQYNQQQQQQMTYQQATLGHLMMPKPPNLIMNPSNYQQIDMRGMYQPVAGGMQPPPLQRAPPPMRSKNPGPSQGKSM.

The disordered stretch occupies residues 1–146 (MTAEPMSESK…DKDDFKGPEF (146 aa)). A Glycyl lysine isopeptide (Lys-Gly) (interchain with G-Cter in SUMO2) cross-link involves residue lysine 10. Residues 17 to 27 (KLHDFLAHSSE) show a composition bias toward basic and acidic residues. Residues serine 25 and serine 34 each carry the phosphoserine modification. The span at 40–57 (MNQNTDKISGSGSNSDMM) shows a compositional bias: polar residues. The segment covering 58 to 72 (ENSKEEGTSSSEKSK) has biased composition (basic and acidic residues). Tyrosine 89 carries the post-translational modification Phosphotyrosine. Phosphoserine is present on residues serine 92 and serine 112. Over residues 92 to 108 (SDDEKPLDDETVNEDAS) the composition is skewed to acidic residues. The segment covering 135–146 (NEDKDDFKGPEF) has biased composition (basic and acidic residues). Residues lysine 138 and lysine 142 each participate in a glycyl lysine isopeptide (Lys-Gly) (interchain with G-Cter in SUMO2) cross-link. Residues 159 to 296 (KRGEDGLHGI…LEQLLQQNKK (138 aa)) form the ADD domain. Residues 170 to 206 (SCTACGQQVNHFQKDSIYRHPSLQVLICKNCFKYYMS) form a GATA-type; atypical zinc finger. At serine 213 the chain carries Phosphoserine. The PHD-type; atypical zinc-finger motif lies at 217–272 (DEQCRWCAEGGNLICCDFCHNAFCKKCILRNLGRKELSTIMDENNQWYCYICHPEP). Lysine 299 is covalently cross-linked (Glycyl lysine isopeptide (Lys-Gly) (interchain with G-Cter in SUMO2)). The residue at position 316 (serine 316) is a Phosphoserine. Residue lysine 438 forms a Glycyl lysine isopeptide (Lys-Gly) (interchain with G-Cter in SUMO2) linkage. Basic and acidic residues predominate over residues 445–502 (KGEKPCALEKKDISKSEAKLSRKQVDSEHMDQNVPTEEQRANKSTGGEHKKSDRKEEP). The segment at 445–614 (KGEKPCALEK…CQEVPQDKDG (170 aa)) is disordered. The span at 550–567 (SGTEQEVESSSVKLNISS) shows a compositional bias: polar residues. Residues 581-594 (KVTKELYVKLTPVS) carry the PxVxL motif motif. At threonine 591 the chain carries Phosphothreonine. Phosphoserine occurs at positions 594 and 598. Lysine 623 is covalently cross-linked (Glycyl lysine isopeptide (Lys-Gly) (interchain with G-Cter in SUMO1); alternate). Lysine 623 participates in a covalent cross-link: Glycyl lysine isopeptide (Lys-Gly) (interchain with G-Cter in SUMO2); alternate. Serine 634 is modified (phosphoserine). The interval 648–1479 (LEESDLRRSP…SKSPGKGRKK (832 aa)) is disordered. Phosphothreonine is present on threonine 674. Serine 675, serine 677, serine 729, and serine 731 each carry phosphoserine. Over residues 755–777 (NEIHTNHKTLYDLKTQAGKDDKG) the composition is skewed to basic and acidic residues. Serine 784, serine 819, serine 849, serine 850, serine 875, and serine 876 each carry phosphoserine. A compositionally biased stretch (basic and acidic residues) spans 843–864 (NTKDFDSSEDEKHSKKGMDNQG). Positions 878 to 887 (DAERKQEREN) are enriched in basic and acidic residues. The residue at position 889 (serine 889) is a Phosphoserine. 2 stretches are compositionally biased toward basic and acidic residues: residues 894–909 (TVDK…DRLP) and 920–944 (GVDK…ETKE). Basic residues predominate over residues 945–955 (KSKHLKTKTCK). Serine 962 bears the Phosphoserine mark. Basic and acidic residues predominate over residues 964-1004 (TAEKFLKKDQSDETSEDDKKQSKKGTEEKKKPSDFKKKVIK). The residue at position 967 (lysine 967) is an N6-acetyllysine. Phosphoserine is present on serine 974. Threonine 977 carries the phosphothreonine modification. Lysine 1004 is covalently cross-linked (Glycyl lysine isopeptide (Lys-Gly) (interchain with G-Cter in SUMO2)). Serine 1011, serine 1012, and serine 1013 each carry phosphoserine. The span at 1015–1027 (GTEKLPEREEICH) shows a compositional bias: basic and acidic residues. Over residues 1045–1055 (KSKKIRDKTSK) the composition is skewed to basic residues. Positions 1056-1082 (KKDELSDYAEKSTGKGDSCDSSEDKKS) are enriched in basic and acidic residues. Position 1061 is a phosphoserine (serine 1061). Tyrosine 1063 carries the post-translational modification Phosphotyrosine. The segment covering 1090 to 1102 (EKKRCKLLGKSSR) has biased composition (basic residues). Positions 1103 to 1139 (KRQDCSSSDTEKYSMKEDGCNSSDKRLKRIELRERRN) are enriched in basic and acidic residues. A compositionally biased stretch (basic residues) spans 1168-1195 (KQQRTSSKKKAVIVKEKKRNSLRTSTKR). Residues 1189–1326 (LRTSTKRKQA…KNQVNSESDS (138 aa)) form an interaction with DAXX region. A compositionally biased stretch (polar residues) spans 1233-1246 (LVLSSHTGFCQSSG). Serine 1244, serine 1245, and serine 1253 each carry phosphoserine. Residues 1267-1281 (PENRIAKKMLLEEIK) are compositionally biased toward basic and acidic residues. Acidic residues predominate over residues 1286–1297 (SDEDGSSDDEPE). A compositionally biased stretch (basic and acidic residues) spans 1298-1308 (EGKKRTGKQNE). A phosphoserine mark is found at serine 1322, serine 1324, and serine 1326. Residues 1334–1345 (PRYRHRLLRHKL) are compositionally biased toward basic residues. A phosphoserine mark is found at serine 1348 and serine 1352. Composition is skewed to basic and acidic residues over residues 1353 to 1368 (GEEK…EVKG) and 1408 to 1417 (KKAELEENQR). Residues 1419-1428 (YKQKKKRRRI) are compositionally biased toward basic residues. Over residues 1443–1468 (EEEEEEKEEEEEEEEEEEEEEEDEND) the composition is skewed to acidic residues. Lysine 1488 participates in a covalent cross-link: Glycyl lysine isopeptide (Lys-Gly) (interchain with G-Cter in SUMO2). Phosphoserine is present on serine 1527. The residue at position 1529 (threonine 1529) is a Phosphothreonine. Positions 1581–1768 (KTKKSPGSGC…HCMVNFIKEN (188 aa)) constitute a Helicase ATP-binding domain. 1594–1601 (HCMGLGKT) lines the ATP pocket. Residues 1719–1722 (DEGH) carry the DEGH box motif. Residues serine 1906 and serine 1913 each carry the phosphoserine modification. Residues 1913–2000 (SDSDETSMSL…SSNPSSPAPD (88 aa)) are disordered. Over residues 1929-1938 (KKKKKGKKGK) the composition is skewed to basic residues. Lysine 1982 participates in a covalent cross-link: Glycyl lysine isopeptide (Lys-Gly) (interchain with G-Cter in SUMO1); alternate. A Glycyl lysine isopeptide (Lys-Gly) (interchain with G-Cter in SUMO2); alternate cross-link involves residue lysine 1982. Lysine 1987 is covalently cross-linked (Glycyl lysine isopeptide (Lys-Gly) (interchain with G-Cter in SUMO2)). Residues 1990 to 1999 (SSSNPSSPAP) show a composition bias toward low complexity. Serine 1992 and serine 1996 each carry phosphoserine. Residues 2010-2280 (DAEVLEHSGK…RKAAWAEYEA (271 aa)) form an interaction with MECP2 region. Positions 2025-2205 (EILRMAEEIG…ERHFTMNELT (181 aa)) constitute a Helicase C-terminal domain. Serine 2220 carries the post-translational modification Phosphoserine. Residues 2462–2492 (PVAGGMQPPPLQRAPPPMRSKNPGPSQGKSM) form a disordered region. Pro residues predominate over residues 2468 to 2479 (QPPPLQRAPPPM). An omega-N-methylarginine mark is found at arginine 2474 and arginine 2480.

The protein belongs to the SNF2/RAD54 helicase family. In terms of assembly, interacts with DAXX to form the chromatin remodeling complex ATRX:DAXX. Probably binds EZH2. Binds annexin V in a calcium and phosphatidylcholine/phosphatidylserine-dependent manner. Interacts directly with CBX5 via the PxVxL motif. Interacts with RAD50, MRE11 and NBN; indicative for an association with the MRN complex. Interacts with histone MACROH2A1. Interacts with histone H3 peptides methylated at 'Lys-10' with preferences H3K9me3 &gt; H3K9me2 &gt; H3K9me1. Interacts with histone H3 peptides unmethylated at 'Lys-5' (H3K4me0). Interacts with MECP2, SMC1 and SMC3. Interacts with SETDB1, TRIM28 and ZNF274.

It is found in the nucleus. The protein resides in the chromosome. It localises to the telomere. Its subcellular location is the PML body. It catalyses the reaction ATP + H2O = ADP + phosphate + H(+). In terms of biological role, involved in transcriptional regulation and chromatin remodeling. Facilitates DNA replication in multiple cellular environments and is required for efficient replication of a subset of genomic loci. Binds to DNA tandem repeat sequences in both telomeres and euchromatin and in vitro binds DNA quadruplex structures. May help stabilizing G-rich regions into regular chromatin structures by remodeling G4 DNA and incorporating H3.3-containing nucleosomes. Catalytic component of the chromatin remodeling complex ATRX:DAXX which has ATP-dependent DNA translocase activity and catalyzes the replication-independent deposition of histone H3.3 in pericentric DNA repeats outside S-phase and telomeres, and the in vitro remodeling of H3.3-containing nucleosomes. Its heterochromatin targeting is proposed to involve a combinatorial readout of histone H3 modifications (specifically methylation states of H3K9 and H3K4) and association with CBX5. Involved in maintaining telomere structural integrity in embryonic stem cells which probably implies recruitment of CBX5 to telomeres. May be involved in transcriptional regulation of telomeric repeat-containing RNA (TERRA). Acts as a negative regulator of chromatin incorporation of transcriptionally repressive histone MACROH2A1, particularily at telomeres. Participates in the allele-specific gene expression at the imprinted IGF2/H19 gene locus. On the maternal allele, required for the chromatin occupancy of SMC1 and CTCTF within the H19 imprinting control region (ICR) and involved in esatblishment of histone tails modifications in the ICR. May be involved in brain development and facial morphogenesis. Binds to zinc-finger coding genes with atypical chromatin signatures and regulates its H3K9me3 levels. Forms a complex with ZNF274, TRIM28 and SETDB1 to facilitate the deposition and maintenance of H3K9me3 at the 3' exons of zinc-finger genes. The protein is Transcriptional regulator ATRX (ATRX) of Pan troglodytes (Chimpanzee).